A 303-amino-acid chain; its full sequence is Protoheme IX farnesyltransferase 2 (303 aa).

9 helical membrane-spanning segments follow: residues 29–49 (VVAL…PGIV), 51–71 (LQPL…AAAF), 96–118 (ISTT…VLYT), 123–143 (LTAW…TAYL), 150–170 (NIVI…TAIT), 177–197 (ALLL…ALAI), 223–243 (CILL…LVGM), 244–264 (CGPI…YKAW), and 281–301 (FSIY…YFWV).

This sequence belongs to the UbiA prenyltransferase family. Protoheme IX farnesyltransferase subfamily.

Its subcellular location is the cell inner membrane. The enzyme catalyses heme b + (2E,6E)-farnesyl diphosphate + H2O = Fe(II)-heme o + diphosphate. Its pathway is porphyrin-containing compound metabolism; heme O biosynthesis; heme O from protoheme: step 1/1. Its function is as follows. Converts heme B (protoheme IX) to heme O by substitution of the vinyl group on carbon 2 of heme B porphyrin ring with a hydroxyethyl farnesyl side group. This chain is Protoheme IX farnesyltransferase 2, found in Shewanella frigidimarina (strain NCIMB 400).